The primary structure comprises 209 residues: MADSKEIKRVLLSPLFDNNPIALQILGVCSALAVTTKLETALVMTLAVTLVTAFSSFFISLIRNHIPNSVRIIVQMVIIASLVIVVDQVLRAYAYEISKQLSVFVGLIITNCIVMGRAEAYAMKSPPIESFMDGIGNGLGYGVILVLVGFVRELVGSGKLFGVTVLETVQNGGWYLPNGLFLLAPSAFFIIGLLIWGLRTLKPAQIEKE.

Helical transmembrane passes span 42–62 (LVMTLAVTLVTAFSSFFISLI), 66–86 (IPNSVRIIVQMVIIASLVIVV), 103–123 (VFVGLIITNCIVMGRAEAYAM), 131–151 (FMDGIGNGLGYGVILVLVGFV), and 178–198 (NGLFLLAPSAFFIIGLLIWGL).

This sequence belongs to the NqrDE/RnfAE family. As to quaternary structure, composed of six subunits; NqrA, NqrB, NqrC, NqrD, NqrE and NqrF.

The protein localises to the cell inner membrane. It catalyses the reaction a ubiquinone + n Na(+)(in) + NADH + H(+) = a ubiquinol + n Na(+)(out) + NAD(+). Functionally, NQR complex catalyzes the reduction of ubiquinone-1 to ubiquinol by two successive reactions, coupled with the transport of Na(+) ions from the cytoplasm to the periplasm. NqrA to NqrE are probably involved in the second step, the conversion of ubisemiquinone to ubiquinol. This is Na(+)-translocating NADH-quinone reductase subunit D from Yersinia pseudotuberculosis serotype O:1b (strain IP 31758).